A 150-amino-acid polypeptide reads, in one-letter code: Large ribosomal subunit protein uL13 (150 aa).

The protein belongs to the universal ribosomal protein uL13 family. Part of the 50S ribosomal subunit.

In terms of biological role, this protein is one of the early assembly proteins of the 50S ribosomal subunit, although it is not seen to bind rRNA by itself. It is important during the early stages of 50S assembly. In Persephonella marina (strain DSM 14350 / EX-H1), this protein is Large ribosomal subunit protein uL13.